The following is a 356-amino-acid chain: Sulfate/thiosulfate import ATP-binding protein CysA (356 aa).

In terms of domain architecture, ABC transporter spans 3 to 237; it reads IEVKNLVKRF…PKNSFVFHFL (235 aa). 35–42 serves as a coordination point for ATP; that stretch reads GPSGSGKT.

The protein belongs to the ABC transporter superfamily. Sulfate/tungstate importer (TC 3.A.1.6) family. The complex is composed of two ATP-binding proteins (CysA), two transmembrane proteins (CysT and CysW) and a solute-binding protein (CysP).

The protein resides in the cell inner membrane. It catalyses the reaction sulfate(out) + ATP + H2O = sulfate(in) + ADP + phosphate + H(+). The catalysed reaction is thiosulfate(out) + ATP + H2O = thiosulfate(in) + ADP + phosphate + H(+). Its function is as follows. Part of the ABC transporter complex CysAWTP involved in sulfate/thiosulfate import. Responsible for energy coupling to the transport system. The chain is Sulfate/thiosulfate import ATP-binding protein CysA from Leptospira interrogans serogroup Icterohaemorrhagiae serovar copenhageni (strain Fiocruz L1-130).